The sequence spans 714 residues: Glutamine-dependent NAD(+) synthetase (714 aa).

A CN hydrolase domain is found at 5-275 (ITLATCNLNQ…VEVVTATVDL (271 aa)). The active-site Proton acceptor; for glutaminase activity is Glu45. Lys114 functions as the For glutaminase activity in the catalytic mechanism. Cys175 (nucleophile; for glutaminase activity) is an active-site residue. The ligase stretch occupies residues 329 to 714 (YHSPEEEIAL…GSTLDIMSID (386 aa)). An ATP-binding site is contributed by 359–366 (PLSGGIDS). Ser361 is a catalytic residue.

In the C-terminal section; belongs to the NAD synthetase family.

The catalysed reaction is deamido-NAD(+) + L-glutamine + ATP + H2O = L-glutamate + AMP + diphosphate + NAD(+) + H(+). It participates in cofactor biosynthesis; NAD(+) biosynthesis; NAD(+) from deamido-NAD(+) (L-Gln route): step 1/1. In Saccharomyces cerevisiae (strain ATCC 204508 / S288c) (Baker's yeast), this protein is Glutamine-dependent NAD(+) synthetase (QNS1).